Here is a 443-residue protein sequence, read N- to C-terminus: UDP-glucuronic acid decarboxylase 4 (443 aa).

Alanine 2 bears the N-acetylalanine mark. The Cytoplasmic segment spans residues 2 to 43; it reads ASELTNRRHEIEQPEAESYYPKPIKPWFVAIRPIRYMLREQR. The chain crosses the membrane as a helical; Signal-anchor for type II membrane protein span at residues 44–64; sequence LVFVLVGIAIATLGFTIFSKS. Over 65–443 the chain is Lumenal; the sequence is SNHQPIPYDV…DSSTTSSSTE (379 aa). 151–176 is a binding site for NAD(+); that stretch reads DNFFTGRKENVMHHFNNPNFEMIRHD. Arginine 260 provides a ligand contact to substrate. The active-site Proton acceptor is tyrosine 263. 263 to 267 serves as a coordination point for NAD(+); sequence YDEGK. Asparagine 292 contacts substrate. Position 304 (arginine 304) interacts with NAD(+). Substrate-binding positions include 305 to 309, 322 to 329, and 389 to 393; these read VVSNF, YGDGKQTR, and DPHKR.

This sequence belongs to the NAD(P)-dependent epimerase/dehydratase family. UDP-glucuronic acid decarboxylase subfamily. Requires NAD(+) as cofactor.

Its subcellular location is the golgi apparatus. The protein localises to the golgi stack membrane. It carries out the reaction UDP-alpha-D-glucuronate + H(+) = UDP-alpha-D-xylose + CO2. Its pathway is nucleotide-sugar biosynthesis; UDP-alpha-D-xylose biosynthesis; UDP-alpha-D-xylose from UDP-alpha-D-glucuronate: step 1/1. Catalyzes the NAD-dependent decarboxylation of UDP-glucuronic acid to UDP-xylose. Necessary for the biosynthesis of the core tetrasaccharide in glycosaminoglycan biosynthesis. This is UDP-glucuronic acid decarboxylase 4 (UXS4) from Arabidopsis thaliana (Mouse-ear cress).